Here is a 353-residue protein sequence, read N- to C-terminus: Phosphoribosylformylglycinamidine cyclo-ligase (353 aa).

This sequence belongs to the AIR synthase family.

It localises to the cytoplasm. The enzyme catalyses 2-formamido-N(1)-(5-O-phospho-beta-D-ribosyl)acetamidine + ATP = 5-amino-1-(5-phospho-beta-D-ribosyl)imidazole + ADP + phosphate + H(+). The protein operates within purine metabolism; IMP biosynthesis via de novo pathway; 5-amino-1-(5-phospho-D-ribosyl)imidazole from N(2)-formyl-N(1)-(5-phospho-D-ribosyl)glycinamide: step 2/2. In Symbiobacterium thermophilum (strain DSM 24528 / JCM 14929 / IAM 14863 / T), this protein is Phosphoribosylformylglycinamidine cyclo-ligase.